The chain runs to 100 residues: NAD(P)H-quinone oxidoreductase subunit 4L, chloroplastic (100 aa).

Transmembrane regions (helical) follow at residues 2–22 (ILQHILILSSFLFCLGIFGLI), 28–48 (VKILICLELIFNAVNLNLVIF), and 61–81 (LFGLFIIAIAAAEAAIALAIL).

Belongs to the complex I subunit 4L family. In terms of assembly, NDH is composed of at least 16 different subunits, 5 of which are encoded in the nucleus.

Its subcellular location is the plastid. It localises to the chloroplast thylakoid membrane. The enzyme catalyses a plastoquinone + NADH + (n+1) H(+)(in) = a plastoquinol + NAD(+) + n H(+)(out). It catalyses the reaction a plastoquinone + NADPH + (n+1) H(+)(in) = a plastoquinol + NADP(+) + n H(+)(out). NDH shuttles electrons from NAD(P)H:plastoquinone, via FMN and iron-sulfur (Fe-S) centers, to quinones in the photosynthetic chain and possibly in a chloroplast respiratory chain. The immediate electron acceptor for the enzyme in this species is believed to be plastoquinone. Couples the redox reaction to proton translocation, and thus conserves the redox energy in a proton gradient. This is NAD(P)H-quinone oxidoreductase subunit 4L, chloroplastic from Chara vulgaris (Common stonewort).